The following is a 490-amino-acid chain: Doublesex- and mab-3-related transcription factor A1 (490 aa).

Residues 1–13 show a composition bias toward basic and acidic residues; sequence MERLPHGRRDRSG. Residues 1–31 form a disordered region; the sequence is MERLPHGRRDRSGGCRPHLAPGRAAAPASAA. Positions 20–31 are enriched in low complexity; it reads APGRAAAPASAA. The segment at residues 86–133 is a DNA-binding region (DM); sequence CARCRNHGVVSALKGHKRFCRWRDCACAKCTLIAERQRVMAAQVALRR. Disordered stretches follow at residues 152-171 and 207-289; these read GSSG…ESPQ and DRKQ…DLES. Basic and acidic residues predominate over residues 207–216; that stretch reads DRKQEPKQRN. Polar residues-rich tracts occupy residues 217-242 and 269-289; these read CESC…SKGN and PTDQ…DLES. The region spanning 314 to 349 is the DMA domain; that stretch reads RDPLGILTRIFPGYKHSRLEGILQFCKGDVVQAIEQ.

The protein belongs to the DMRT family. Widely expressed, with highest levels in ovary, testis, epididymis, preputial gland, vomeronasal organ, liver, salivary glands and heart. Also expressed throughout the brain with highest levels in the olfactory bulbs and medulla. Detected at similar levels in gonads of both sexes.

It localises to the nucleus. The chain is Doublesex- and mab-3-related transcription factor A1 (Dmrta1) from Mus musculus (Mouse).